The primary structure comprises 312 residues: L-type lectin-like domain-containing protein C126.08c (312 aa).

The N-terminal stretch at 1 to 22 is a signal peptide; the sequence is MFFSVKNVFLLGIFGFVLGALA. At 23–280 the chain is on the extracellular side; that stretch reads ETSHLERLSL…QKKGSFKKRL (258 aa). In terms of domain architecture, L-type lectin-like spans 24–248; that stretch reads TSHLERLSLE…EIASILSRTI (225 aa). The chain crosses the membrane as a helical span at residues 281-301; it reads IILLLSLIVIFSIFALRSYQV. The Cytoplasmic portion of the chain corresponds to 302–312; sequence QQEKNRRTTVL.

The protein resides in the membrane. It is found in the endoplasmic reticulum. The protein localises to the golgi apparatus. It localises to the vacuole. This chain is L-type lectin-like domain-containing protein C126.08c, found in Schizosaccharomyces pombe (strain 972 / ATCC 24843) (Fission yeast).